Here is a 313-residue protein sequence, read N- to C-terminus: Probable RuBisCO transcriptional regulator (313 aa).

One can recognise an HTH lysR-type domain in the interval 6–63 (FTLDQLLILKAIAAQGSFKKAADSLYISQPAVSMQVQNIEKQLNVQLLDRGGRRANLT). Positions 23-42 (FKKAADSLYISQPAVSMQVQ) form a DNA-binding region, H-T-H motif.

This sequence belongs to the LysR transcriptional regulatory family.

Its subcellular location is the plastid. It localises to the chloroplast. Functionally, trans-acting transcriptional regulator of RuBisCO genes (rbcL and rbcS) expression. The sequence is that of Probable RuBisCO transcriptional regulator (rbcR) from Chlorokybus atmophyticus (Soil alga).